The following is a 349-amino-acid chain: tRNA-specific 2-thiouridylase MnmA (349 aa).

ATP is bound by residues 7 to 14 (GLSGGVDS) and Leu-33. The Nucleophile role is filled by Cys-94. Cys-94 and Cys-193 form a disulfide bridge. Gly-119 is a binding site for ATP. Residues 143 to 145 (KDQ) form an interaction with tRNA region. The active-site Cysteine persulfide intermediate is the Cys-193. Residues 298–299 (RY) are interaction with tRNA.

It belongs to the MnmA/TRMU family.

It is found in the cytoplasm. The enzyme catalyses S-sulfanyl-L-cysteinyl-[protein] + uridine(34) in tRNA + AH2 + ATP = 2-thiouridine(34) in tRNA + L-cysteinyl-[protein] + A + AMP + diphosphate + H(+). Catalyzes the 2-thiolation of uridine at the wobble position (U34) of tRNA, leading to the formation of s(2)U34. The chain is tRNA-specific 2-thiouridylase MnmA from Rippkaea orientalis (strain PCC 8801 / RF-1) (Cyanothece sp. (strain PCC 8801)).